We begin with the raw amino-acid sequence, 347 residues long: GMP reductase (347 aa).

Position 108–131 (108–131 (ADFEKTKQILDLNPALNFVCIDVA)) interacts with NADP(+). K(+) is bound by residues G181 and G183. C186 serves as the catalytic Thioimidate intermediate. 216–239 (IVSDGGCTTPGDVAKAFGGGADFV) lines the NADP(+) pocket.

This sequence belongs to the IMPDH/GMPR family. GuaC type 1 subfamily. Homotetramer.

The enzyme catalyses IMP + NH4(+) + NADP(+) = GMP + NADPH + 2 H(+). Its function is as follows. Catalyzes the irreversible NADPH-dependent deamination of GMP to IMP. It functions in the conversion of nucleobase, nucleoside and nucleotide derivatives of G to A nucleotides, and in maintaining the intracellular balance of A and G nucleotides. This is GMP reductase from Shigella dysenteriae serotype 1 (strain Sd197).